The sequence spans 185 residues: Elongation factor P (185 aa).

It belongs to the elongation factor P family.

It is found in the cytoplasm. Its pathway is protein biosynthesis; polypeptide chain elongation. Its function is as follows. Involved in peptide bond synthesis. Stimulates efficient translation and peptide-bond synthesis on native or reconstituted 70S ribosomes in vitro. Probably functions indirectly by altering the affinity of the ribosome for aminoacyl-tRNA, thus increasing their reactivity as acceptors for peptidyl transferase. This is Elongation factor P from Thermosipho africanus (strain TCF52B).